The following is a 585-amino-acid chain: Aspartate--tRNA ligase (585 aa).

E173 provides a ligand contact to L-aspartate. The interval 197 to 200 (QTLK) is aspartate. R219 serves as a coordination point for L-aspartate. Residues 219–221 (RDE) and Q228 each bind ATP. An L-aspartate-binding site is contributed by H446. E480 is a binding site for ATP. Residue R487 participates in L-aspartate binding. Residue 532 to 535 (GLDR) coordinates ATP.

Belongs to the class-II aminoacyl-tRNA synthetase family. Type 1 subfamily. Homodimer.

The protein resides in the cytoplasm. It carries out the reaction tRNA(Asp) + L-aspartate + ATP = L-aspartyl-tRNA(Asp) + AMP + diphosphate. In terms of biological role, catalyzes the attachment of L-aspartate to tRNA(Asp) in a two-step reaction: L-aspartate is first activated by ATP to form Asp-AMP and then transferred to the acceptor end of tRNA(Asp). The protein is Aspartate--tRNA ligase of Parabacteroides distasonis (strain ATCC 8503 / DSM 20701 / CIP 104284 / JCM 5825 / NCTC 11152).